Reading from the N-terminus, the 555-residue chain is Bifunctional epoxide hydrolase 2 (555 aa).

Positions 1–224 (MALRAAVFDL…KVTGVQLLQT (224 aa)) are phosphatase. D9 and D11 together coordinate Mg(2+). At K43 the chain carries N6-acetyllysine. 123–124 (TN) provides a ligand contact to phosphate. D185 is a Mg(2+) binding site. An N6-acetyllysine mark is found at K191 and K215. The segment at 235 to 555 (SALSHGYVLI…ARNPLVDSKL (321 aa)) is epoxide hydrolase. In terms of domain architecture, AB hydrolase-1 spans 259–531 (PAVCLCHGFP…CGHWTQIDKP (273 aa)). D335 functions as the Nucleophile in the catalytic mechanism. Residue S370 is modified to Phosphoserine. Y383 contacts substrate. Position 455 is an N6-succinyllysine (K455). The Proton donor role is filled by Y466. An N6-succinyllysine modification is found at K505. C522 carries the S-(15-deoxy-Delta12,14-prostaglandin J2-9-yl)cysteine lipid modification. The active-site Proton acceptor is H524. The short motif at 553 to 555 (SKL) is the Microbody targeting signal element. N6-succinyllysine is present on K554.

The protein belongs to the AB hydrolase superfamily. Epoxide hydrolase family. In terms of assembly, homodimer. Mg(2+) is required as a cofactor. Post-translationally, the covalent modification of cysteine by 15-deoxy-Delta12,14-prostaglandin-J2 is autocatalytic and reversible. It may occur as an alternative to other cysteine modifications, such as S-nitrosylation and S-palmitoylation.

The protein localises to the cytoplasm. Its subcellular location is the peroxisome. The catalysed reaction is an epoxide + H2O = an ethanediol. It carries out the reaction (9S,10S)-10-hydroxy-9-(phosphooxy)octadecanoate + H2O = (9S,10S)-9,10-dihydroxyoctadecanoate + phosphate. The enzyme catalyses (14R,15S)-epoxy-(5Z,8Z,11Z)-eicosatrienoate + H2O = (14R,15R)-dihydroxy-(5Z,8Z,11Z)-eicosatrienoate. With respect to regulation, inhibited by 1-(1-acetylpiperidin-4-yl)-3-(4-(trifl uoromethoxy)phenyl)urea (TPAU), 1-cyclohexyl-3-dodecylurea (CDU), 12-(3-adamantan-1-yl-ureido)-dodecanoic acid (AUDA), 1-((3S, 5S, 7S)-adamantan-1-yl)-3-(5-(2-(2-ethoxyethoxy) ethoxy)pentyl)urea (AEPU), N-adamantyl-N[']-cyclohexyl urea (ACU), 4-(((1S, 4S)-4-(3-((3S, 5S, 7S)-adamantan-1-yl) ureido)cyclohexyl)oxy)benzoic acid (c-AUCB), 4-(((1R, 4R)-4-(3-((3S, 5S, 7S)-adamantan-1-yl)ureido)cyclohexyl)oxy)benzoic acid (t-AUCB), 4-(((1R, 4R)-4-(3-(4(trifluoromethoxy)phenyl)ureido)cyclohexyl)oxy)benzoic acid (t-TAUCB) and to a lesser extent by 8-(3-((3S, 5S, 7S)-adamantan-1-yl)ureido) octanoic acid (AUOA). In terms of biological role, bifunctional enzyme. The C-terminal domain has epoxide hydrolase activity and acts on epoxides (alkene oxides, oxiranes) and arene oxides. Plays a role in xenobiotic metabolism by degrading potentially toxic epoxides. Also determines steady-state levels of physiological mediators. The N-terminal domain has lipid phosphatase activity, with the highest activity towards threo-9,10-phosphonooxy-hydroxy-octadecanoic acid, followed by erythro-9,10-phosphonooxy-hydroxy-octadecanoic acid, 12-phosphonooxy-octadec-9Z-enoic acid and 12-phosphonooxy-octadec-9E-enoic acid. In Sus scrofa (Pig), this protein is Bifunctional epoxide hydrolase 2 (EPHX2).